A 132-amino-acid polypeptide reads, in one-letter code: NAD(P)H-quinone oxidoreductase subunit 3 (132 aa).

3 helical membrane passes run F22–L42, M76–V96, and L101–V121.

It belongs to the complex I subunit 3 family. In terms of assembly, NDH-1 can be composed of about 15 different subunits; different subcomplexes with different compositions have been identified which probably have different functions.

It is found in the cellular thylakoid membrane. The catalysed reaction is a plastoquinone + NADH + (n+1) H(+)(in) = a plastoquinol + NAD(+) + n H(+)(out). It carries out the reaction a plastoquinone + NADPH + (n+1) H(+)(in) = a plastoquinol + NADP(+) + n H(+)(out). NDH-1 shuttles electrons from an unknown electron donor, via FMN and iron-sulfur (Fe-S) centers, to quinones in the respiratory and/or the photosynthetic chain. The immediate electron acceptor for the enzyme in this species is believed to be plastoquinone. Couples the redox reaction to proton translocation, and thus conserves the redox energy in a proton gradient. Cyanobacterial NDH-1 also plays a role in inorganic carbon-concentration. This Thermosynechococcus vestitus (strain NIES-2133 / IAM M-273 / BP-1) protein is NAD(P)H-quinone oxidoreductase subunit 3 (ndhC).